A 100-amino-acid chain; its full sequence is Toxin Rv0299 (100 aa).

Functionally, toxic component of a type II toxin-antitoxin (TA) system. Upon expression in M.smegmatis inhibits colony formation. Its toxic effect is neutralized by coexpression with cognate antitoxin Rv0298/MT0312. In Mycobacterium tuberculosis (strain ATCC 25618 / H37Rv), this protein is Toxin Rv0299.